The primary structure comprises 322 residues: uncharacterized protein (322 aa).

8 helical membrane-spanning segments follow: residues 7 to 27 (IQKIAPAAIGACLFVLSIGAI), 54 to 74 (AFALMLINYIILTGYDTLAMF), 87 to 107 (FVGFVSYAISNSVGLALLSGS), 128 to 148 (IAFCNLSFWVGLLTVGGITFV), 162 to 182 (FLSVHPIGFTFLAIIGIYLLI), 209 to 229 (IGLTAVDWILASGILYVLLPG), 249 to 269 (GIISNVPGGLGVFETVVLFLL), and 287 to 307 (VIYYWIPLGSASLSLGAFELL).

It to E.coli YbhN.

It localises to the cell membrane. This is an uncharacterized protein from Synechocystis sp. (strain ATCC 27184 / PCC 6803 / Kazusa).